A 176-amino-acid polypeptide reads, in one-letter code: Large ribosomal subunit protein uL6 (176 aa).

This sequence belongs to the universal ribosomal protein uL6 family. Part of the 50S ribosomal subunit.

This protein binds to the 23S rRNA, and is important in its secondary structure. It is located near the subunit interface in the base of the L7/L12 stalk, and near the tRNA binding site of the peptidyltransferase center. The protein is Large ribosomal subunit protein uL6 of Methanothrix thermoacetophila (strain DSM 6194 / JCM 14653 / NBRC 101360 / PT) (Methanosaeta thermophila).